The primary structure comprises 105 residues: Large ribosomal subunit protein eL36 (105 aa).

The disordered stretch occupies residues 9–31 (VGLNKGHKVTKNVSKPRHSRRRR). Residues 13-31 (KGHKVTKNVSKPRHSRRRR) are compositionally biased toward basic residues. An N6-acetyllysine modification is found at lysine 62.

This sequence belongs to the eukaryotic ribosomal protein eL36 family. In terms of assembly, component of the large ribosomal subunit.

The protein resides in the cytoplasm. The protein localises to the cytosol. Component of the large ribosomal subunit. The ribosome is a large ribonucleoprotein complex responsible for the synthesis of proteins in the cell. The sequence is that of Large ribosomal subunit protein eL36 (RPL36) from Oryctolagus cuniculus (Rabbit).